Reading from the N-terminus, the 548-residue chain is Chaperonin GroEL (548 aa).

Residues 29 to 32 (TLGP), 86 to 90 (DGTTT), glycine 413, 476 to 478 (NAL), and aspartate 492 contribute to the ATP site. Acidic residues predominate over residues 522–531 (PDEDDNDDGD). A disordered region spans residues 522 to 548 (PDEDDNDDGDMGGGAPGMGGMGGMPGM). Positions 532–548 (MGGGAPGMGGMGGMPGM) are enriched in gly residues.

This sequence belongs to the chaperonin (HSP60) family. As to quaternary structure, forms a cylinder of 14 subunits composed of two heptameric rings stacked back-to-back. Interacts with the co-chaperonin GroES.

Its subcellular location is the cytoplasm. It catalyses the reaction ATP + H2O + a folded polypeptide = ADP + phosphate + an unfolded polypeptide.. Together with its co-chaperonin GroES, plays an essential role in assisting protein folding. The GroEL-GroES system forms a nano-cage that allows encapsulation of the non-native substrate proteins and provides a physical environment optimized to promote and accelerate protein folding. The protein is Chaperonin GroEL of Natranaerobius thermophilus (strain ATCC BAA-1301 / DSM 18059 / JW/NM-WN-LF).